The primary structure comprises 82 residues: Consomatin Mao1 (82 aa).

The N-terminal stretch at 1 to 22 (MQTASWVMVMMMVWITAPLSEG) is a signal peptide. Residues 23–57 (GKLNDVIRGLVPDDVTPQLILRSLFFHRPSDSVVR) constitute a propeptide that is removed on maturation. A disulfide bridge connects residues Cys-65 and Cys-70. D-tryptophan is present on Trp-67. 4-hydroxyproline is present on residues Pro-71, Pro-72, and Pro-74. Positions 75 to 82 (WRRPNGKG) are excised as a propeptide.

This sequence belongs to the conotoxin C superfamily. Consomatin family. Expressed by the venom duct.

Its subcellular location is the secreted. In terms of biological role, moderately activates human somatostatin receptors (SSTR) with a preferential activation of SSTR1 and SSTR4. In vivo, does not cause behavioral changes in mice within a few minutes of intracranial injection, but causes a progressive loss of movement thereafter. Four to five hours after injection, mice recover, even with the highest dose tested. Shows antinociception and antihyperalgesia activities in two mouse models of acute pain, most probably by acting outside the central nervous system. The protein is Consomatin Mao1 of Conus maioensis (Sea snail).